Here is a 312-residue protein sequence, read N- to C-terminus: Ribosomal protein L11 methyltransferase (312 aa).

S-adenosyl-L-methionine is bound by residues Thr-160, Gly-181, Asp-203, and Asn-246.

Belongs to the methyltransferase superfamily. PrmA family.

It is found in the cytoplasm. The enzyme catalyses L-lysyl-[protein] + 3 S-adenosyl-L-methionine = N(6),N(6),N(6)-trimethyl-L-lysyl-[protein] + 3 S-adenosyl-L-homocysteine + 3 H(+). Functionally, methylates ribosomal protein L11. In Staphylococcus aureus (strain JH1), this protein is Ribosomal protein L11 methyltransferase.